We begin with the raw amino-acid sequence, 245 residues long: 1-(5-phosphoribosyl)-5-[(5-phosphoribosylamino)methylideneamino] imidazole-4-carboxamide isomerase (245 aa).

The active-site Proton acceptor is D8. Catalysis depends on D130, which acts as the Proton donor.

Belongs to the HisA/HisF family.

Its subcellular location is the cytoplasm. It catalyses the reaction 1-(5-phospho-beta-D-ribosyl)-5-[(5-phospho-beta-D-ribosylamino)methylideneamino]imidazole-4-carboxamide = 5-[(5-phospho-1-deoxy-D-ribulos-1-ylimino)methylamino]-1-(5-phospho-beta-D-ribosyl)imidazole-4-carboxamide. The protein operates within amino-acid biosynthesis; L-histidine biosynthesis; L-histidine from 5-phospho-alpha-D-ribose 1-diphosphate: step 4/9. This chain is 1-(5-phosphoribosyl)-5-[(5-phosphoribosylamino)methylideneamino] imidazole-4-carboxamide isomerase, found in Pseudomonas putida (strain ATCC 700007 / DSM 6899 / JCM 31910 / BCRC 17059 / LMG 24140 / F1).